The following is a 976-amino-acid chain: Protein phosphatase 1 regulatory subunit 12B (976 aa).

The segment covering 1 to 24 has biased composition (basic and acidic residues); sequence MAELEHLGGKRAESARARRAEQLR. The tract at residues 1–52 is disordered; it reads MAELEHLGGKRAESARARRAEQLRRWRGSLTEQEPAERQGAGRQLQTRRGSP. Serine 29 is subject to Phosphoserine. ANK repeat units lie at residues 57 to 86, 90 to 119, 123 to 152, 216 to 245, and 249 to 278; these read EDGA…DINT, DGLT…NVNQ, EGWT…SVGI, SGAT…ELNV, and DGWT…DMDI. The segment at 342 to 489 is disordered; the sequence is EEIPKSQDTE…LDDKDKEREN (148 aa). Residues 362–374 are compositionally biased toward acidic residues; that stretch reads SEEEEGEDEVSES. Residues 375–385 are compositionally biased toward basic and acidic residues; that stretch reads ETEKEADKKPE. The span at 411-423 shows a compositional bias: low complexity; sequence FSASSARRLSSLF. Threonine 444 bears the Phosphothreonine mark. The segment covering 465–477 has biased composition (low complexity); sequence SSIYRSSSSPRIS. Residues 480 to 489 show a composition bias toward basic and acidic residues; sequence LDDKDKEREN. The residue at position 502 (serine 502) is a Phosphoserine. The segment at 503–873 is disordered; sequence STSDIEEKEN…LTSRVEEDSN (371 aa). The span at 538-564 shows a compositional bias: polar residues; that stretch reads ETPQTIAPSTYTSTYLKRTPYKSQADS. Over residues 622 to 631 the composition is skewed to basic and acidic residues; that stretch reads VRDEEAESLR. The span at 632 to 642 shows a compositional bias: basic residues; sequence KARSRQARQTR. Phosphothreonine is present on threonine 645. The segment covering 655–679 has biased composition (basic and acidic residues); that stretch reads EAEKTFSRSRAERQAQEQPGEKLED. 2 stretches are compositionally biased toward polar residues: residues 722–739 and 747–763; these read DKPT…SLYT and SRAS…STHA. Over residues 765-777 the composition is skewed to basic and acidic residues; it reads AAKEMDTSEKGEA. Over residues 791 to 801 the composition is skewed to basic residues; the sequence is ERRRAKDRRRG. Threonine 802 carries the phosphothreonine modification. Positions 818 to 830 are enriched in basic and acidic residues; it reads EEVKEALHERLSR. Residue serine 833 is modified to Phosphoserine. The segment covering 844–860 has biased composition (basic and acidic residues); sequence YSDRASARARREAREAR. Serine 941 carries the post-translational modification Phosphoserine.

PP1 comprises a catalytic subunit, PPP1CA, PPP1CB or PPP1CC, and one or several targeting or regulatory subunits. PPP1R12B mediates binding to myosin. Isoform 3 and isoform 4 bind PPP1R12A, but not isoform 1 of PPP1R12B itself. Binds IL16.

Its subcellular location is the cytoplasm. The protein resides in the cytoskeleton. It is found in the stress fiber. Functionally, regulates myosin phosphatase activity. Augments Ca(2+) sensitivity of the contractile apparatus. This is Protein phosphatase 1 regulatory subunit 12B (Ppp1r12b) from Mus musculus (Mouse).